Consider the following 633-residue polypeptide: ATP-dependent clpX-like chaperone, mitochondrial (633 aa).

Residues 1–56 (MSSCGACTCGAAAARLLTTSLTSAQRGISCGRIHVPVLGRLGTLDTQILRRAPLRT) constitute a mitochondrion transit peptide. Residues 65 to 101 (ASKDGTNKDGSGDGNKKSVTEGSSKKSGSGNSGKGGN) are disordered. The span at 69–83 (GTNKDGSGDGNKKSV) shows a compositional bias: basic and acidic residues. Low complexity predominate over residues 84 to 93 (TEGSSKKSGS). Residues 93-146 (SGNSGKGGNQLRCPKCGDLCTHVETFVSSTRFVKCEKCHHFFVVLSEADSKKSI) form the ClpX-type ZB domain. Residues C105, C108, C127, and C130 each contribute to the Zn(2+) site. ATP is bound at residue 294 to 301 (PTGSGKTL). K437 is modified (N6-acetyllysine). Positions 598 to 610 (KEPGYIRAPSKES) are enriched in basic and acidic residues. The segment at 598–633 (KEPGYIRAPSKESSEEDYDSGVEEDGWPRQADAANS) is disordered. Residues 611–622 (SEEDYDSGVEED) show a composition bias toward acidic residues. S617 is subject to Phosphoserine.

Belongs to the ClpX chaperone family. Homohexamer that forms a ring structure; this hexamerization requires ATP binding. Component of the ClpXP complex formed by the assembly of two CLPP heptameric rings with two CLPX hexameric rings, giving rise to a symmetrical structure with two central CLPP rings flanked by a CLPX ring at either end of the complex. Interacts with TFAM.

The protein localises to the mitochondrion. Its subcellular location is the mitochondrion matrix. The protein resides in the mitochondrion nucleoid. The enzyme catalyses ATP + H2O = ADP + phosphate + H(+). Functionally, ATP-dependent chaperone that functions as an unfoldase. As part of the ClpXP protease complex, it recognizes specific protein substrates, unfolds them using energy derived from ATP hydrolysis, and then translocates them to the proteolytic subunit (CLPP) of the ClpXP complex for degradation. Thanks to its chaperone activity, it also functions in the incorporation of the pyridoxal phosphate cofactor into 5-aminolevulinate synthase, thereby activating 5-aminolevulinate (ALA) synthesis, the first step in heme biosynthesis. This chaperone is also involved in the control of mtDNA nucleoid distribution, by regulating mitochondrial transcription factor A (TFAM) activity. The protein is ATP-dependent clpX-like chaperone, mitochondrial of Rattus norvegicus (Rat).